Here is a 514-residue protein sequence, read N- to C-terminus: 1-pyrroline-5-carboxylate dehydrogenase (514 aa).

Active-site residues include Glu286 and Cys320.

It belongs to the aldehyde dehydrogenase family. RocA subfamily.

The catalysed reaction is L-glutamate 5-semialdehyde + NAD(+) + H2O = L-glutamate + NADH + 2 H(+). It participates in amino-acid degradation; L-proline degradation into L-glutamate; L-glutamate from L-proline: step 2/2. This Staphylococcus aureus (strain MW2) protein is 1-pyrroline-5-carboxylate dehydrogenase.